The chain runs to 119 residues: E3 ubiquitin-protein ligase PPP1R11 (119 aa).

Residues 1 to 42 (MAESSGPTAGGGATSSTVTTESDTQPEHRSLTLKLRKRKPDK) form a disordered region. 2 atypical RING finger domain regions span residues 55-65 (NLGRRSSKCCC) and 87-96 (CESAHCIRGH). Positions 96 to 119 (HKKATSGSKETPSSHHDKTGSMQH) are disordered. Over residues 107-119 (PSSHHDKTGSMQH) the composition is skewed to basic and acidic residues.

The catalysed reaction is S-ubiquitinyl-[E2 ubiquitin-conjugating enzyme]-L-cysteine + [acceptor protein]-L-lysine = [E2 ubiquitin-conjugating enzyme]-L-cysteine + N(6)-ubiquitinyl-[acceptor protein]-L-lysine.. It participates in protein modification; protein ubiquitination. Atypical E3 ubiquitin-protein ligase which ubiquitinates TLR2 at 'Lys-754' leading to its degradation by the proteasome. Inhibitor of protein phosphatase 1. The polypeptide is E3 ubiquitin-protein ligase PPP1R11 (ppp1r11) (Xenopus tropicalis (Western clawed frog)).